The sequence spans 930 residues: Protein translocase subunit SecA (930 aa).

ATP contacts are provided by residues Q87, 105–109 (GEGKT), and D515. Residues C914, C916, C925, and H926 each contribute to the Zn(2+) site.

This sequence belongs to the SecA family. As to quaternary structure, monomer and homodimer. Part of the essential Sec protein translocation apparatus which comprises SecA, SecYEG and auxiliary proteins SecDF-YajC and YidC. Zn(2+) serves as cofactor.

Its subcellular location is the cell inner membrane. The protein resides in the cytoplasm. It catalyses the reaction ATP + H2O + cellular proteinSide 1 = ADP + phosphate + cellular proteinSide 2.. In terms of biological role, part of the Sec protein translocase complex. Interacts with the SecYEG preprotein conducting channel. Has a central role in coupling the hydrolysis of ATP to the transfer of proteins into and across the cell membrane, serving both as a receptor for the preprotein-SecB complex and as an ATP-driven molecular motor driving the stepwise translocation of polypeptide chains across the membrane. The chain is Protein translocase subunit SecA from Burkholderia thailandensis (strain ATCC 700388 / DSM 13276 / CCUG 48851 / CIP 106301 / E264).